The following is a 434-amino-acid chain: dTDP-D-glucose 4,6-dehydratase (434 aa).

Thr134 is a substrate binding site. The Proton donor role is filled by Asp135. Active-site proton acceptor residues include Glu136 and Tyr169. Positions 286-309 (NNNNNNNNNNNNNNNNNNNNNNNN) are enriched in low complexity. The tract at residues 286 to 310 (NNNNNNNNNNNNNNNNNNNNNNNND) is disordered.

Belongs to the NAD(P)-dependent epimerase/dehydratase family. dTDP-glucose dehydratase subfamily. NAD(+) serves as cofactor.

It carries out the reaction dTDP-alpha-D-glucose = dTDP-4-dehydro-6-deoxy-alpha-D-glucose + H2O. The sequence is that of dTDP-D-glucose 4,6-dehydratase (tgds) from Dictyostelium discoideum (Social amoeba).